A 499-amino-acid polypeptide reads, in one-letter code: Glycerol kinase (499 aa).

An ADP-binding site is contributed by threonine 13. ATP contacts are provided by threonine 13, threonine 14, and serine 15. Threonine 13 is a sn-glycerol 3-phosphate binding site. Arginine 17 contacts ADP. Arginine 83, glutamate 84, tyrosine 135, and aspartate 245 together coordinate sn-glycerol 3-phosphate. Residues arginine 83, glutamate 84, tyrosine 135, aspartate 245, and glutamine 246 each contribute to the glycerol site. Threonine 267 and glycine 310 together coordinate ADP. 4 residues coordinate ATP: threonine 267, glycine 310, glutamine 314, and glycine 411. Residues glycine 411 and asparagine 415 each contribute to the ADP site.

This sequence belongs to the FGGY kinase family.

It carries out the reaction glycerol + ATP = sn-glycerol 3-phosphate + ADP + H(+). The protein operates within polyol metabolism; glycerol degradation via glycerol kinase pathway; sn-glycerol 3-phosphate from glycerol: step 1/1. With respect to regulation, inhibited by fructose 1,6-bisphosphate (FBP). In terms of biological role, key enzyme in the regulation of glycerol uptake and metabolism. Catalyzes the phosphorylation of glycerol to yield sn-glycerol 3-phosphate. In Xanthomonas campestris pv. campestris (strain ATCC 33913 / DSM 3586 / NCPPB 528 / LMG 568 / P 25), this protein is Glycerol kinase.